Here is a 476-residue protein sequence, read N- to C-terminus: ATP synthase subunit beta (476 aa).

An ATP-binding site is contributed by 154-161 (GGAGVGKT).

This sequence belongs to the ATPase alpha/beta chains family. In terms of assembly, F-type ATPases have 2 components, CF(1) - the catalytic core - and CF(0) - the membrane proton channel. CF(1) has five subunits: alpha(3), beta(3), gamma(1), delta(1), epsilon(1). CF(0) has four main subunits: a(1), b(1), b'(1) and c(9-12).

The protein localises to the cell inner membrane. It carries out the reaction ATP + H2O + 4 H(+)(in) = ADP + phosphate + 5 H(+)(out). Its function is as follows. Produces ATP from ADP in the presence of a proton gradient across the membrane. The catalytic sites are hosted primarily by the beta subunits. The sequence is that of ATP synthase subunit beta from Rhodopseudomonas palustris (strain BisA53).